A 406-amino-acid polypeptide reads, in one-letter code: Imidazolonepropionase (406 aa).

Fe(3+)-binding residues include histidine 65 and histidine 67. Positions 65 and 67 each coordinate Zn(2+). Residues arginine 74, tyrosine 137, and histidine 170 each coordinate 4-imidazolone-5-propanoate. Tyrosine 137 contributes to the N-formimidoyl-L-glutamate binding site. Fe(3+) is bound at residue histidine 235. Histidine 235 serves as a coordination point for Zn(2+). Position 238 (glutamine 238) interacts with 4-imidazolone-5-propanoate. Residue aspartate 310 coordinates Fe(3+). Residue aspartate 310 coordinates Zn(2+). N-formimidoyl-L-glutamate-binding residues include asparagine 312 and glycine 314. Threonine 315 contacts 4-imidazolone-5-propanoate.

It belongs to the metallo-dependent hydrolases superfamily. HutI family. The cofactor is Zn(2+). It depends on Fe(3+) as a cofactor.

The protein localises to the cytoplasm. It carries out the reaction 4-imidazolone-5-propanoate + H2O = N-formimidoyl-L-glutamate. The protein operates within amino-acid degradation; L-histidine degradation into L-glutamate; N-formimidoyl-L-glutamate from L-histidine: step 3/3. Catalyzes the hydrolytic cleavage of the carbon-nitrogen bond in imidazolone-5-propanoate to yield N-formimidoyl-L-glutamate. It is the third step in the universal histidine degradation pathway. The sequence is that of Imidazolonepropionase from Vibrio vulnificus (strain YJ016).